Here is a 173-residue protein sequence, read N- to C-terminus: Small ribosomal subunit protein uS5 (173 aa).

The region spanning 18-81 (YVEKLVKLNR…EKAKANMVTF (64 aa)) is the S5 DRBM domain.

Belongs to the universal ribosomal protein uS5 family. Part of the 30S ribosomal subunit. Contacts proteins S4 and S8.

Its function is as follows. With S4 and S12 plays an important role in translational accuracy. In terms of biological role, located at the back of the 30S subunit body where it stabilizes the conformation of the head with respect to the body. The sequence is that of Small ribosomal subunit protein uS5 from Treponema denticola (strain ATCC 35405 / DSM 14222 / CIP 103919 / JCM 8153 / KCTC 15104).